The sequence spans 1088 residues: MIQQYNPFKKDAFDILLPDLVGIQLESFSTFLKKGLIEQLRDFSVITDPTNNLELRLLVEQYKLKRPRYNEKKCIRRACTYASQLYIPAQLINKKTGKVQEQDVFLGEMPIMTSRGNFIINGSARVIVNQIVRSPGIYYKREIDPKEGIKTYSASIICNRGAWLRLETDKNGFVWARIGKVRKVSGFILLRAMGLTKSKILNSLRHPEFFQKTIEEGDPYSENDALIDLHSQLYPERPSTLFAARELLKSKFFDPKYYDLGKVGRYKINKKLQLSIPEDIRVLTPQDILTAIDYLINLEFNIGTLDDIDHLKNRRVRSVGELIENQVRVGLSRLERMTYKRMAESHPDALTPASLINPKPLVGVLREFFGSSQLSQFMDQTNPLSEMTHKRRISCLGPGGLSKERAGLAVRDIHPSHYGRICPIETPEGPNAGLIGSLATHARVNPYGFLESPFYPTKNRKVFKKTLPIYLSPDQEDELRVSPGDLLLSSSGKLEGKTVPIRYKQDFSTSRSDQVDYVGISPIQAISIATSLIPFLEHDDANRALMGSNMQRQAVPVIRPERPVVGTGLEAQAALDSGTVIVARHDGIVSLVDSNKIILRSSCGSNQTKVDSVGLNFDYQIDRYHLQKYNRSNQDTCINQRPVVHQGEFIKKGDILADGAATVGGQLTLGKNVLVAYMPWEGYNFEDAILISQRLVYDDIYTSIHIEKYEIEARKTKLGPEKITREVPNLGDYVLRNLDENGIVIPGAWVEAGDILVGKVTPKEDLDQHPEGKLLRAIFSEKARDVRDTSLRVPNGVRGRVVDVRRLKGSELPSGVNMVVHIFISQKRKIQVGDKMAGRHGNKGIISRILPRQDMPYLQDGTPVDMVLNPLGVPSRMNVGQVYECLLGLAGHFLGEEYKLIPFDEMYGKEASRGFVYSKLYEARKKTGYPWLFDIANPGKSQLFDGRTGEPFDQPVTVGRAYMLKLVHLVDDKIHARSTGPYSLVTQQPLGGKAKHGGQRLGEMEVWALEGFGAAYTLQELLTVKSDDMKGRNEAQHAIIKGRPIPKPGTPESFKVLIRELQSLCLDIGIYKIDKTKKGQEIDLMMSM.

The protein belongs to the RNA polymerase beta chain family. As to quaternary structure, in plastids the minimal PEP RNA polymerase catalytic core is composed of four subunits: alpha, beta, beta', and beta''. When a (nuclear-encoded) sigma factor is associated with the core the holoenzyme is formed, which can initiate transcription.

Its subcellular location is the plastid. The protein localises to the chloroplast. It carries out the reaction RNA(n) + a ribonucleoside 5'-triphosphate = RNA(n+1) + diphosphate. In terms of biological role, DNA-dependent RNA polymerase catalyzes the transcription of DNA into RNA using the four ribonucleoside triphosphates as substrates. In Chlorokybus atmophyticus (Soil alga), this protein is DNA-directed RNA polymerase subunit beta.